Here is a 359-residue protein sequence, read N- to C-terminus: Diacyltrehalose acyltransferase Chp2 (359 aa).

Residues Val4–Ile24 traverse the membrane as a helical segment. In terms of domain architecture, PE-PPE spans Pro79 to Tyr316.

It belongs to the mycobacterial PPE family.

It is found in the cell inner membrane. With respect to regulation, activity is probably potentiated by the DAT/PAT transporter MmpL10. Inhibited by the lipase inhibitor tetrahydrolipstatin (THL). In terms of biological role, involved in the final steps of polyacyltrehalose (PAT) biosynthesis. Catalyzes the transfer of three mycolipenoyl groups onto diacyltrehalose (DAT) to form PAT. The polypeptide is Diacyltrehalose acyltransferase Chp2 (Mycobacterium tuberculosis (strain ATCC 25618 / H37Rv)).